Here is a 673-residue protein sequence, read N- to C-terminus: DNA ligase (673 aa).

Residues 32–36, 81–82, and Glu113 each bind NAD(+); these read DAEYD and SL. Lys115 functions as the N6-AMP-lysine intermediate in the catalytic mechanism. Residues Arg136, Glu173, Lys290, and Lys314 each contribute to the NAD(+) site. Cys408, Cys411, Cys426, and Cys432 together coordinate Zn(2+). Positions 595–673 constitute a BRCT domain; it reads EIDSPFAGKT…EAEMIRLLGA (79 aa).

This sequence belongs to the NAD-dependent DNA ligase family. LigA subfamily. It depends on Mg(2+) as a cofactor. Mn(2+) is required as a cofactor.

The catalysed reaction is NAD(+) + (deoxyribonucleotide)n-3'-hydroxyl + 5'-phospho-(deoxyribonucleotide)m = (deoxyribonucleotide)n+m + AMP + beta-nicotinamide D-nucleotide.. Functionally, DNA ligase that catalyzes the formation of phosphodiester linkages between 5'-phosphoryl and 3'-hydroxyl groups in double-stranded DNA using NAD as a coenzyme and as the energy source for the reaction. It is essential for DNA replication and repair of damaged DNA. The sequence is that of DNA ligase from Serratia proteamaculans (strain 568).